The sequence spans 172 residues: Large ribosomal subunit protein uL10 (172 aa).

It belongs to the universal ribosomal protein uL10 family. As to quaternary structure, part of the ribosomal stalk of the 50S ribosomal subunit. The N-terminus interacts with L11 and the large rRNA to form the base of the stalk. The C-terminus forms an elongated spine to which L12 dimers bind in a sequential fashion forming a multimeric L10(L12)X complex.

In terms of biological role, forms part of the ribosomal stalk, playing a central role in the interaction of the ribosome with GTP-bound translation factors. The protein is Large ribosomal subunit protein uL10 of Xanthobacter autotrophicus (strain ATCC BAA-1158 / Py2).